The primary structure comprises 183 residues: Ribosome maturation factor RimM (183 aa).

Residues 105–181 form the PRC barrel domain; it reads ANEYHLMDLI…RIEIDPPLGL (77 aa).

It belongs to the RimM family. As to quaternary structure, binds ribosomal protein uS19.

The protein localises to the cytoplasm. Functionally, an accessory protein needed during the final step in the assembly of 30S ribosomal subunit, possibly for assembly of the head region. Essential for efficient processing of 16S rRNA. May be needed both before and after RbfA during the maturation of 16S rRNA. It has affinity for free ribosomal 30S subunits but not for 70S ribosomes. This chain is Ribosome maturation factor RimM, found in Thermosynechococcus vestitus (strain NIES-2133 / IAM M-273 / BP-1).